The chain runs to 179 residues: Large ribosomal subunit protein uL5 (179 aa).

This sequence belongs to the universal ribosomal protein uL5 family. Part of the 50S ribosomal subunit; part of the 5S rRNA/L5/L18/L25 subcomplex. Contacts the 5S rRNA and the P site tRNA. Forms a bridge to the 30S subunit in the 70S ribosome.

This is one of the proteins that bind and probably mediate the attachment of the 5S RNA into the large ribosomal subunit, where it forms part of the central protuberance. In the 70S ribosome it contacts protein S13 of the 30S subunit (bridge B1b), connecting the 2 subunits; this bridge is implicated in subunit movement. Contacts the P site tRNA; the 5S rRNA and some of its associated proteins might help stabilize positioning of ribosome-bound tRNAs. This Aeromonas salmonicida (strain A449) protein is Large ribosomal subunit protein uL5.